Consider the following 523-residue polypeptide: Glutamate--cysteine ligase (523 aa).

It belongs to the glutamate--cysteine ligase type 1 family. Type 1 subfamily.

The catalysed reaction is L-cysteine + L-glutamate + ATP = gamma-L-glutamyl-L-cysteine + ADP + phosphate + H(+). It participates in sulfur metabolism; glutathione biosynthesis; glutathione from L-cysteine and L-glutamate: step 1/2. The protein is Glutamate--cysteine ligase of Shewanella oneidensis (strain ATCC 700550 / JCM 31522 / CIP 106686 / LMG 19005 / NCIMB 14063 / MR-1).